Consider the following 203-residue polypeptide: Glycerol-3-phosphate acyltransferase (203 aa).

Transmembrane regions (helical) follow at residues 6–26 (LTLL…AVLV), 82–102 (AISL…PIFF), 118–138 (APIG…LVLI), and 141–161 (YSSL…WWLD).

It belongs to the PlsY family. Probably interacts with PlsX.

The protein resides in the cell inner membrane. It catalyses the reaction an acyl phosphate + sn-glycerol 3-phosphate = a 1-acyl-sn-glycero-3-phosphate + phosphate. The protein operates within lipid metabolism; phospholipid metabolism. In terms of biological role, catalyzes the transfer of an acyl group from acyl-phosphate (acyl-PO(4)) to glycerol-3-phosphate (G3P) to form lysophosphatidic acid (LPA). This enzyme utilizes acyl-phosphate as fatty acyl donor, but not acyl-CoA or acyl-ACP. This Shewanella sp. (strain MR-4) protein is Glycerol-3-phosphate acyltransferase.